A 338-amino-acid polypeptide reads, in one-letter code: 1-aminocyclopropane-1-carboxylate deaminase (338 aa).

Residue Lys-51 is modified to N6-(pyridoxal phosphate)lysine. Residue Ser-78 is the Nucleophile of the active site.

The protein belongs to the ACC deaminase/D-cysteine desulfhydrase family. As to quaternary structure, homotrimer. Requires pyridoxal 5'-phosphate as cofactor.

It carries out the reaction 1-aminocyclopropane-1-carboxylate + H2O = 2-oxobutanoate + NH4(+). Its function is as follows. Catalyzes a cyclopropane ring-opening reaction, the irreversible conversion of 1-aminocyclopropane-1-carboxylate (ACC) to ammonia and alpha-ketobutyrate. Allows growth on ACC as a nitrogen source. This is 1-aminocyclopropane-1-carboxylate deaminase from Variovorax paradoxus.